The sequence spans 165 residues: Large ribosomal subunit protein uL11 (165 aa).

Serine 38 carries the post-translational modification Phosphoserine. Lysine 40 is covalently cross-linked (Glycyl lysine isopeptide (Lys-Gly) (interchain with G-Cter in SUMO2)). A Glycyl lysine isopeptide (Lys-Gly) (interchain with G-Cter in ubiquitin) cross-link involves residue lysine 48. The residue at position 54 (lysine 54) is an N6-acetyllysine. Lysine 83 participates in a covalent cross-link: Glycyl lysine isopeptide (Lys-Gly) (interchain with G-Cter in ubiquitin). Serine 165 is subject to Phosphoserine.

Belongs to the universal ribosomal protein uL11 family. Component of the large ribosomal subunit. Mature ribosomes consist of a small (40S) and a large (60S) subunit. The 40S subunit contains about 33 different proteins and 1 molecule of RNA (18S). The 60S subunit contains about 49 different proteins and 3 molecules of RNA (28S, 5.8S and 5S). Ubiquitinated at Lys-48 and Lys-83 by RNF14 and RNF25 in response to ribosome collisions (ribosome stalling).

Its subcellular location is the cytoplasm. Component of the large ribosomal subunit. The ribosome is a large ribonucleoprotein complex responsible for the synthesis of proteins in the cell. Binds directly to 26S ribosomal RNA. This chain is Large ribosomal subunit protein uL11 (RPL12), found in Bos taurus (Bovine).